Here is a 154-residue protein sequence, read N- to C-terminus: Aspartate carbamoyltransferase regulatory chain (154 aa).

Zn(2+) contacts are provided by C111, C116, C139, and C142.

It belongs to the PyrI family. As to quaternary structure, contains catalytic and regulatory chains. Zn(2+) is required as a cofactor.

Involved in allosteric regulation of aspartate carbamoyltransferase. In Parabacteroides distasonis (strain ATCC 8503 / DSM 20701 / CIP 104284 / JCM 5825 / NCTC 11152), this protein is Aspartate carbamoyltransferase regulatory chain.